Reading from the N-terminus, the 177-residue chain is Adenine phosphoribosyltransferase (177 aa).

Belongs to the purine/pyrimidine phosphoribosyltransferase family. Homodimer.

It is found in the cytoplasm. The enzyme catalyses AMP + diphosphate = 5-phospho-alpha-D-ribose 1-diphosphate + adenine. It functions in the pathway purine metabolism; AMP biosynthesis via salvage pathway; AMP from adenine: step 1/1. Catalyzes a salvage reaction resulting in the formation of AMP, that is energically less costly than de novo synthesis. The sequence is that of Adenine phosphoribosyltransferase from Chlorobaculum tepidum (strain ATCC 49652 / DSM 12025 / NBRC 103806 / TLS) (Chlorobium tepidum).